The following is a 609-amino-acid chain: Protein FRIGIDA (609 aa).

The span at 1–18 shows a compositional bias: low complexity; that stretch reads MSNYPPTVAAQPTTTANP. Positions 1-31 are disordered; it reads MSNYPPTVAAQPTTTANPLLQRHQSEQRRRE. 2 coiled-coil regions span residues 60-97 and 409-440; these read DELA…LESN and QIKE…LMEE. Disordered stretches follow at residues 454 to 488 and 587 to 609; these read RPRL…DDQD and SEER…LDPK. A compositionally biased stretch (basic and acidic residues) spans 474-484; the sequence is YRDRSFPSQRD. Positions 594-609 are enriched in polar residues; the sequence is LSNQRSPRSNSSLDPK.

It belongs to the Frigida family. In terms of assembly, homodimer. Component of the transcription activator complex FRI-C composed of FRI, FRL1, SUF4, FLX and FES1. Interacts (via N-terminus) with FRL1 and (via C-terminus) with FLX (via N-terminus), SUF4 (via C-terminus) and FES1 (via C-terminus). Interacts with ASHH2 and RIN1, a component of the SWR1 chromatin-remodeling complex. Interacts with CBP20, FIP1 and FIP2. Expressed in ovules, but not in stamens.

Its subcellular location is the nucleus speckle. Functionally, required for the regulation of flowering time in the late-flowering phenotype. Involved in the enrichment of a WDR5A-containing COMPASS-like complex at the 'FLOWERING LOCUS C' that trimethylates histone H3 'Lys-4', leading to FLC up-regulation and RNA levels increase. Variants with an early-flowering phenotype (Including cv. Columbia, cv. Landsberg Erecta and cv. Wassilewskija) show loss-of-function mutations of FRI. Able to delay flowering independently of FRL1 activity. Dispensable for the reactivation of FLC in early embryogenesis, but required to maintain high levels of FLC expression in later embryonic and vegetative development. Suppresses the repression of FLC by the autonomous pathway, but has no effect on the expression of the genes involved in this pathway. The protein is Protein FRIGIDA of Arabidopsis thaliana (Mouse-ear cress).